The chain runs to 503 residues: Lactation elevated protein 1 homolog B (503 aa).

Residues 108 to 155 are disordered; that stretch reads LQNQPTSELQDKVGSRETVNICRPDENVSNEKEDQQEESSKPHPPQGY. Positions 130–148 are enriched in basic and acidic residues; that stretch reads RPDENVSNEKEDQQEESSK. Residue 159 to 166 coordinates ATP; sequence GNVGTGKT.

This sequence belongs to the AFG1 ATPase family.

This Danio rerio (Zebrafish) protein is Lactation elevated protein 1 homolog B (lace1b).